We begin with the raw amino-acid sequence, 206 residues long: Probable GTP-binding protein EngB (206 aa).

In terms of domain architecture, EngB-type G spans 23–195 (DLLEIAFVGR…WARIEAIMAE (173 aa)). GTP is bound by residues 31 to 38 (GRSNVGKS), 58 to 62 (GRTQL), 76 to 79 (DLPG), 143 to 146 (TKCD), and 174 to 176 (FSA). Serine 38 and threonine 60 together coordinate Mg(2+).

This sequence belongs to the TRAFAC class TrmE-Era-EngA-EngB-Septin-like GTPase superfamily. EngB GTPase family. Mg(2+) serves as cofactor.

In terms of biological role, necessary for normal cell division and for the maintenance of normal septation. This is Probable GTP-binding protein EngB from Geobacter sulfurreducens (strain ATCC 51573 / DSM 12127 / PCA).